The sequence spans 148 residues: Aspartate carbamoyltransferase regulatory chain (148 aa).

Zn(2+)-binding residues include C106, C111, C134, and C137.

It belongs to the PyrI family. As to quaternary structure, contains catalytic and regulatory chains. It depends on Zn(2+) as a cofactor.

Functionally, involved in allosteric regulation of aspartate carbamoyltransferase. This chain is Aspartate carbamoyltransferase regulatory chain, found in Methanococcus vannielii (strain ATCC 35089 / DSM 1224 / JCM 13029 / OCM 148 / SB).